Here is a 435-residue protein sequence, read N- to C-terminus: Eukaryotic translation initiation factor 3 subunit E (435 aa).

The PCI domain maps to 241-409; the sequence is TDMFFSPSYI…GTVIMNHPPQ (169 aa).

Belongs to the eIF-3 subunit E family. As to quaternary structure, component of the eukaryotic translation initiation factor 3 (eIF-3) complex.

The protein localises to the cytoplasm. Its function is as follows. Component of the eukaryotic translation initiation factor 3 (eIF-3) complex, which is involved in protein synthesis of a specialized repertoire of mRNAs and, together with other initiation factors, stimulates binding of mRNA and methionyl-tRNAi to the 40S ribosome. The eIF-3 complex specifically targets and initiates translation of a subset of mRNAs involved in cell proliferation. The protein is Eukaryotic translation initiation factor 3 subunit E of Phaeosphaeria nodorum (strain SN15 / ATCC MYA-4574 / FGSC 10173) (Glume blotch fungus).